Here is a 238-residue protein sequence, read N- to C-terminus: Probable transcriptional regulatory protein YeeN (238 aa).

This sequence belongs to the TACO1 family. YeeN subfamily.

Its subcellular location is the cytoplasm. The sequence is that of Probable transcriptional regulatory protein YeeN from Shigella sonnei (strain Ss046).